Here is a 919-residue protein sequence, read N- to C-terminus: Protein phosphatase 1 regulatory subunit 37 (919 aa).

LRR repeat units lie at residues 340–361 (SLQYLDARNTPLLDHSAPFVAR), 368–388 (SLTVLHLENSGISGRPLMLLA), 396–417 (NLRELYLAENKLNGLQDSAQLG), 425–445 (NIQILDLRNNHILDSGLAYVC), 454–474 (GLVTLVLWNNQLTHNGMGYLA), and 482–502 (SLETLNLGHNAVGNEGVHKLK). 2 disordered regions span residues 626–716 (ATED…TIPS) and 790–866 (APSQ…APLP). Over residues 631-640 (THEEEEEEEA) the composition is skewed to acidic residues. Residues 641 to 658 (SPLKKIEEETTDALKDAT) are compositionally biased toward basic and acidic residues. A compositionally biased stretch (acidic residues) spans 677–690 (PQDDSDSDTEDEET). Residues 691 to 701 (PTNTSLTSTSP) are compositionally biased toward low complexity. Composition is skewed to polar residues over residues 791–801 (PSQTQNSTQPT) and 811–837 (DAQQEDSVSTSTPSLDANIDQTQLTES). Residues 833-861 (QLTESVSEEEQKKAETLNNEADINEDANT) are a coiled coil.

It belongs to the PPP1R37 family.

Functionally, may inhibit phosphatase activity of protein phosphatase 1 (PP1) complexes. This chain is Protein phosphatase 1 regulatory subunit 37 (ppp1r37), found in Danio rerio (Zebrafish).